The sequence spans 180 residues: Transcription repressor NadR (180 aa).

In terms of assembly, homodimer.

Functionally, in the presence of nicotinic acid represses transcription of the nadBCA and nifS-nadR operons. Also binds to DNA upstream of the niaP gene, probably regulating it as well. May bind nicotinic acid. The polypeptide is Transcription repressor NadR (nadR) (Bacillus subtilis (strain 168)).